The primary structure comprises 72 residues: Translation initiation factor IF-1 (72 aa).

The S1-like domain maps to 1-72; it reads MAKEDNIEMQ…SKGRIVFRAR (72 aa).

It belongs to the IF-1 family. As to quaternary structure, component of the 30S ribosomal translation pre-initiation complex which assembles on the 30S ribosome in the order IF-2 and IF-3, IF-1 and N-formylmethionyl-tRNA(fMet); mRNA recruitment can occur at any time during PIC assembly.

It localises to the cytoplasm. Functionally, one of the essential components for the initiation of protein synthesis. Stabilizes the binding of IF-2 and IF-3 on the 30S subunit to which N-formylmethionyl-tRNA(fMet) subsequently binds. Helps modulate mRNA selection, yielding the 30S pre-initiation complex (PIC). Upon addition of the 50S ribosomal subunit IF-1, IF-2 and IF-3 are released leaving the mature 70S translation initiation complex. The polypeptide is Translation initiation factor IF-1 (Shewanella frigidimarina (strain NCIMB 400)).